The following is a 328-amino-acid chain: Formimidoylglutamase (328 aa).

Mn(2+) contacts are provided by His133, Asp159, His161, Asp163, Asp253, and Asp255.

The protein belongs to the arginase family. Mn(2+) is required as a cofactor.

It carries out the reaction N-formimidoyl-L-glutamate + H2O = formamide + L-glutamate. The protein operates within amino-acid degradation; L-histidine degradation into L-glutamate; L-glutamate from N-formimidoyl-L-glutamate (hydrolase route): step 1/1. In terms of biological role, catalyzes the conversion of N-formimidoyl-L-glutamate to L-glutamate and formamide. This chain is Formimidoylglutamase, found in Streptococcus pyogenes serotype M3 (strain ATCC BAA-595 / MGAS315).